A 156-amino-acid chain; its full sequence is Small ribosomal subunit protein uS7 (156 aa).

The protein belongs to the universal ribosomal protein uS7 family. Part of the 30S ribosomal subunit. Contacts proteins S9 and S11.

Its function is as follows. One of the primary rRNA binding proteins, it binds directly to 16S rRNA where it nucleates assembly of the head domain of the 30S subunit. Is located at the subunit interface close to the decoding center, probably blocks exit of the E-site tRNA. The polypeptide is Small ribosomal subunit protein uS7 (Prochlorococcus marinus (strain MIT 9312)).